The primary structure comprises 49 residues: MDKEAKVKSTGERGIIEAIYPETETVELCYYDGTYDERRFDDVVMATSS.

The polypeptide is SPbeta prophage-derived uncharacterized protein YorN (yorN) (Bacillus subtilis (strain 168)).